A 233-amino-acid chain; its full sequence is 5'-methylthioadenosine/S-adenosylhomocysteine nucleosidase (233 aa).

Glu-12 acts as the Proton acceptor in catalysis. Substrate-binding positions include Gly-78, Ile-156, and Met-177–Glu-178. The active-site Proton donor is the Asp-201.

Belongs to the PNP/UDP phosphorylase family. MtnN subfamily.

The catalysed reaction is S-adenosyl-L-homocysteine + H2O = S-(5-deoxy-D-ribos-5-yl)-L-homocysteine + adenine. The enzyme catalyses S-methyl-5'-thioadenosine + H2O = 5-(methylsulfanyl)-D-ribose + adenine. It catalyses the reaction 5'-deoxyadenosine + H2O = 5-deoxy-D-ribose + adenine. It functions in the pathway amino-acid biosynthesis; L-methionine biosynthesis via salvage pathway; S-methyl-5-thio-alpha-D-ribose 1-phosphate from S-methyl-5'-thioadenosine (hydrolase route): step 1/2. Catalyzes the irreversible cleavage of the glycosidic bond in both 5'-methylthioadenosine (MTA) and S-adenosylhomocysteine (SAH/AdoHcy) to adenine and the corresponding thioribose, 5'-methylthioribose and S-ribosylhomocysteine, respectively. Also cleaves 5'-deoxyadenosine, a toxic by-product of radical S-adenosylmethionine (SAM) enzymes, into 5-deoxyribose and adenine. The sequence is that of 5'-methylthioadenosine/S-adenosylhomocysteine nucleosidase from Listeria monocytogenes serotype 4b (strain CLIP80459).